Here is a 178-residue protein sequence, read N- to C-terminus: ATP synthase subunit delta (178 aa).

Belongs to the ATPase delta chain family. F-type ATPases have 2 components, F(1) - the catalytic core - and F(0) - the membrane proton channel. F(1) has five subunits: alpha(3), beta(3), gamma(1), delta(1), epsilon(1). F(0) has three main subunits: a(1), b(2) and c(10-14). The alpha and beta chains form an alternating ring which encloses part of the gamma chain. F(1) is attached to F(0) by a central stalk formed by the gamma and epsilon chains, while a peripheral stalk is formed by the delta and b chains.

It localises to the cell membrane. Its function is as follows. F(1)F(0) ATP synthase produces ATP from ADP in the presence of a proton or sodium gradient. F-type ATPases consist of two structural domains, F(1) containing the extramembraneous catalytic core and F(0) containing the membrane proton channel, linked together by a central stalk and a peripheral stalk. During catalysis, ATP synthesis in the catalytic domain of F(1) is coupled via a rotary mechanism of the central stalk subunits to proton translocation. Functionally, this protein is part of the stalk that links CF(0) to CF(1). It either transmits conformational changes from CF(0) to CF(1) or is implicated in proton conduction. The sequence is that of ATP synthase subunit delta from Streptococcus pyogenes serotype M1.